We begin with the raw amino-acid sequence, 453 residues long: Trigger factor (453 aa).

The PPIase FKBP-type domain maps to 171 to 256; sequence GDRVTINFKG…ATSIEAPQDI (86 aa).

This sequence belongs to the FKBP-type PPIase family. Tig subfamily.

It localises to the cytoplasm. It catalyses the reaction [protein]-peptidylproline (omega=180) = [protein]-peptidylproline (omega=0). Functionally, involved in protein export. Acts as a chaperone by maintaining the newly synthesized protein in an open conformation. Functions as a peptidyl-prolyl cis-trans isomerase. The polypeptide is Trigger factor (Bradyrhizobium diazoefficiens (strain JCM 10833 / BCRC 13528 / IAM 13628 / NBRC 14792 / USDA 110)).